A 540-amino-acid polypeptide reads, in one-letter code: Chaperonin GroEL (540 aa).

ATP is bound by residues 29–32 (TLGP), 86–90 (DGTTT), Gly-413, 476–478 (NAA), and Asp-492.

The protein belongs to the chaperonin (HSP60) family. In terms of assembly, forms a cylinder of 14 subunits composed of two heptameric rings stacked back-to-back. Interacts with the co-chaperonin GroES.

The protein localises to the cytoplasm. It catalyses the reaction ATP + H2O + a folded polypeptide = ADP + phosphate + an unfolded polypeptide.. In terms of biological role, together with its co-chaperonin GroES, plays an essential role in assisting protein folding. The GroEL-GroES system forms a nano-cage that allows encapsulation of the non-native substrate proteins and provides a physical environment optimized to promote and accelerate protein folding. The protein is Chaperonin GroEL of Streptococcus gordonii (strain Challis / ATCC 35105 / BCRC 15272 / CH1 / DL1 / V288).